Here is a 453-residue protein sequence, read N- to C-terminus: MAVSVIILAAGQGTRMHSTLPKVLHQLAGRPLLSHVIATARQLNPAQIIVVYGHGGETVPEAFRAADITWVRQELQLGTGHAALQTLPYIKPDTMLLILSGDVPLVKIETLKRLLAMVDQGGVGLLTVELANPNGYGRIIRDRVGGVSKIIEEADASPEQRRIREVNTGITAIEARYLKQIAPKLSNNNAQGEYYLTDIIEHAVASGEKVVAVSAADSIEVMGVNDRQQLAYLERFYQKREAARLMGEGVSLSDPDRFDLRGELLVGKDVYIDINVILEGRVILGDGVKIGPHCYLRNAVLGEGVEVLANCVIEEAAIDACARVGPFTRIRPETRLGEGVHIGNFVEIKKSTINKNSKVNHLSYIGDATIGKKVNIGAGTITCNYDGANKHHTLIEDNVFIGSDTQLIAPVKIGAGATIGAGATITHDVPPGELTLSRTPQKSWPGWKRPSKK.

A pyrophosphorylase region spans residues 1–227 (MAVSVIILAA…SIEVMGVNDR (227 aa)). UDP-N-acetyl-alpha-D-glucosamine-binding positions include 8 to 11 (LAAG), lysine 22, glutamine 73, 78 to 79 (GT), 100 to 102 (SGD), glycine 137, glutamate 152, asparagine 167, and asparagine 225. Mg(2+) is bound at residue aspartate 102. Asparagine 225 contributes to the Mg(2+) binding site. Residues 228–248 (QQLAYLERFYQKREAARLMGE) form a linker region. Positions 249–453 (GVSLSDPDRF…WPGWKRPSKK (205 aa)) are N-acetyltransferase. UDP-N-acetyl-alpha-D-glucosamine is bound by residues arginine 331 and lysine 349. The active-site Proton acceptor is the histidine 361. UDP-N-acetyl-alpha-D-glucosamine is bound by residues tyrosine 364 and asparagine 375. Residues alanine 378, 384 to 385 (NY), serine 403, alanine 421, and arginine 438 contribute to the acetyl-CoA site. Residues 430–453 (PPGELTLSRTPQKSWPGWKRPSKK) form a disordered region.

The protein in the N-terminal section; belongs to the N-acetylglucosamine-1-phosphate uridyltransferase family. It in the C-terminal section; belongs to the transferase hexapeptide repeat family. As to quaternary structure, homotrimer. The cofactor is Mg(2+).

The protein resides in the cytoplasm. It carries out the reaction alpha-D-glucosamine 1-phosphate + acetyl-CoA = N-acetyl-alpha-D-glucosamine 1-phosphate + CoA + H(+). The catalysed reaction is N-acetyl-alpha-D-glucosamine 1-phosphate + UTP + H(+) = UDP-N-acetyl-alpha-D-glucosamine + diphosphate. The protein operates within nucleotide-sugar biosynthesis; UDP-N-acetyl-alpha-D-glucosamine biosynthesis; N-acetyl-alpha-D-glucosamine 1-phosphate from alpha-D-glucosamine 6-phosphate (route II): step 2/2. It participates in nucleotide-sugar biosynthesis; UDP-N-acetyl-alpha-D-glucosamine biosynthesis; UDP-N-acetyl-alpha-D-glucosamine from N-acetyl-alpha-D-glucosamine 1-phosphate: step 1/1. Its pathway is bacterial outer membrane biogenesis; LPS lipid A biosynthesis. Functionally, catalyzes the last two sequential reactions in the de novo biosynthetic pathway for UDP-N-acetylglucosamine (UDP-GlcNAc). The C-terminal domain catalyzes the transfer of acetyl group from acetyl coenzyme A to glucosamine-1-phosphate (GlcN-1-P) to produce N-acetylglucosamine-1-phosphate (GlcNAc-1-P), which is converted into UDP-GlcNAc by the transfer of uridine 5-monophosphate (from uridine 5-triphosphate), a reaction catalyzed by the N-terminal domain. This chain is Bifunctional protein GlmU, found in Nitrosococcus oceani (strain ATCC 19707 / BCRC 17464 / JCM 30415 / NCIMB 11848 / C-107).